We begin with the raw amino-acid sequence, 621 residues long: Exonuclease 3'-5' domain-containing protein 2 (621 aa).

The Mitochondrial intermembrane segment spans residues 1–4 (MSRQ). A helical membrane pass occupies residues 5–25 (NLVALTVTTLLGVAVGGFVLW). The Cytoplasmic segment spans residues 26–621 (KGIQRRRRSK…FGEDLPIQLS (596 aa)). The segment at 34 to 68 (SKTSPVTQQPQQKVLGSRELPPPEDDQLHSSAPRS) is disordered. The span at 36–47 (TSPVTQQPQQKV) shows a compositional bias: polar residues. Positions 108, 110, and 246 each coordinate a divalent metal cation. One can recognise a 3'-5' exonuclease domain in the interval 155–247 (ILADGTILKV…DQVIYAARDA (93 aa)). The segment at 299–343 (RLGEEVNGEATESQQKPRNKKSKMDGMVPGNHQGRDPRKHKRKPL) is disordered.

Belongs to the EXD2 family. Homodimer. Interacts with RBBP8, MRE11 and BRCA1. The cofactor is Mg(2+). Mn(2+) serves as cofactor.

The protein localises to the mitochondrion outer membrane. Its subcellular location is the mitochondrion matrix. The protein resides in the nucleus. It localises to the chromosome. The catalysed reaction is Exonucleolytic cleavage in the 3'- to 5'-direction to yield nucleoside 5'-phosphates.. Exonuclease that has both 3'-5' exoribonuclease and exodeoxyribonuclease activities, depending on the divalent metal cation used as cofactor. In presence of Mg(2+), only shows 3'-5' exoribonuclease activity, while it shows both exoribonuclease and exodeoxyribonuclease activities in presence of Mn(2+). Acts as an exoribonuclease in mitochondrion, possibly by regulating ATP production and mitochondrial translation. Also involved in the response to DNA damage. Acts as 3'-5' exodeoxyribonuclease for double-strand breaks resection and efficient homologous recombination. Plays a key role in controlling the initial steps of chromosomal break repair, it is recruited to chromatin in a damage-dependent manner and functionally interacts with the MRN complex to accelerate resection through its 3'-5' exonuclease activity, which efficiently processes double-stranded DNA substrates containing nicks. Also involved in response to replicative stress: recruited to stalled forks and is required to stabilize and restart stalled replication forks by restraining excessive fork regression, thereby suppressing their degradation. The chain is Exonuclease 3'-5' domain-containing protein 2 from Homo sapiens (Human).